Here is a 336-residue protein sequence, read N- to C-terminus: MLALGKLLELTLAGREPAEKTQLTVDGVRMRWLSEGALEVRPPEARDNGLDLLLSAGIHGNETAPIELLDRLLHDIARGDLKPRARILFLFGNPEAMRRGERFVEQDVNRLFNGRHESSSGFEALRACELERLAASFFSQPDRQRLHYDLHTAIRGSKIEQFALYPWKDGRQHSRRELARLRAAGMEAVLLQNKPSIVFSAYTYDQLGAESFTLELGKARPFGQNQGVNVERLETRLKQIIDGSEPPAEQDSLDGLQLFSVAREVIKHSDSFHLHLPADIENFSELEVGYLLAEDIAQTRWVIEETGARIIFPNPKVKNGLRAGILIVPATADGLA.

The Zn(2+) site is built by histidine 59, glutamate 62, and histidine 151. Glutamate 215 is an active-site residue.

The protein belongs to the AspA/AstE family. Succinylglutamate desuccinylase subfamily. The cofactor is Zn(2+).

The catalysed reaction is N-succinyl-L-glutamate + H2O = L-glutamate + succinate. Its pathway is amino-acid degradation; L-arginine degradation via AST pathway; L-glutamate and succinate from L-arginine: step 5/5. In terms of biological role, transforms N(2)-succinylglutamate into succinate and glutamate. The protein is Succinylglutamate desuccinylase of Pseudomonas fluorescens (strain ATCC BAA-477 / NRRL B-23932 / Pf-5).